Consider the following 439-residue polypeptide: uncharacterized protein (439 aa).

The TRAM domain maps to 1–55 (MLEQVRIQKMVNGGYGLAHLSNGKVVLVEGAYPGEEVLIKTYREKRDFSFGKVVS). Residues Cys68, Cys74, Cys77, and Cys149 each coordinate [4Fe-4S] cluster. S-adenosyl-L-methionine contacts are provided by Gln272, Tyr301, Glu322, and Asp367. Cys394 functions as the Nucleophile in the catalytic mechanism.

This sequence belongs to the class I-like SAM-binding methyltransferase superfamily. RNA M5U methyltransferase family.

This is an uncharacterized protein from Thermotoga maritima (strain ATCC 43589 / DSM 3109 / JCM 10099 / NBRC 100826 / MSB8).